Consider the following 277-residue polypeptide: 3-methyl-2-oxobutanoate hydroxymethyltransferase (277 aa).

Residues aspartate 43 and aspartate 82 each contribute to the Mg(2+) site. Residues 43 to 44, aspartate 82, and lysine 112 contribute to the 3-methyl-2-oxobutanoate site; that span reads DS. Glutamate 114 contributes to the Mg(2+) binding site. The Proton acceptor role is filled by glutamate 181.

This sequence belongs to the PanB family. In terms of assembly, homodecamer; pentamer of dimers. Mg(2+) serves as cofactor.

It is found in the cytoplasm. It catalyses the reaction 3-methyl-2-oxobutanoate + (6R)-5,10-methylene-5,6,7,8-tetrahydrofolate + H2O = 2-dehydropantoate + (6S)-5,6,7,8-tetrahydrofolate. It functions in the pathway cofactor biosynthesis; (R)-pantothenate biosynthesis; (R)-pantoate from 3-methyl-2-oxobutanoate: step 1/2. Functionally, catalyzes the reversible reaction in which hydroxymethyl group from 5,10-methylenetetrahydrofolate is transferred onto alpha-ketoisovalerate to form ketopantoate. This is 3-methyl-2-oxobutanoate hydroxymethyltransferase from Listeria monocytogenes serovar 1/2a (strain ATCC BAA-679 / EGD-e).